The chain runs to 417 residues: MFQCLEPERNEEAGLVYVREKGKLSVIGSHSSELRTRPCRLFSKGFSVELCGKQEDTSKHRQKPFIFTYTKEGSLRYSAKSLFTLTLELISDNIQYVDSLMGFPDQIAEKLFTAAEAKQKFYAPCSGLMALRKFTEAYGDLVLSSLCLRGRYLLVSERLEEIKSFQCLHSLDLSCCKLGDEHELLAHLSSDPMSSLTELYLKDNCLSNIGIQKMTASVRVLGRGLDKLKVLDLSSNPGITDRGVCFLFGFKLLKFLDLSDTSIQDPSGTLKKIETKIGLVLSKKSIFQFDHTNCRTQGWAEQLLEQWESYILSAIKPKDTLKSRNAAQQFYGKEKKQIPSDSGTFTLPAPVVQKQTHLQFFRPKEQKDPDSSNSEKRRHSTKRTGADCVQEDCSIAPSTKRPRVTLTSSDWDLLNSY.

LRR repeat units lie at residues Cys167–Leu188, Ser195–Thr215, Lys227–Phe248, and Leu252–Ile273. The disordered stretch occupies residues Phe360–Gln390. Residues Arg362–Glu375 are compositionally biased toward basic and acidic residues.

The protein belongs to the LRRC42 family.

In Xenopus laevis (African clawed frog), this protein is Leucine-rich repeat-containing protein 42 (lrrc42).